Here is a 395-residue protein sequence, read N- to C-terminus: Chorismate synthase (395 aa).

Residues Arg40 and Arg46 each contribute to the NADP(+) site. FMN contacts are provided by residues 135–137 (RAS) and 256–257 (QA). Residues 272 to 283 (RRGSQAHDEMRP) show a composition bias toward basic and acidic residues. Positions 272-296 (RRGSQAHDEMRPGPDGILRSTNRAG) are disordered. FMN is bound by residues Gly300, 315-319 (KPIST), and Arg341.

This sequence belongs to the chorismate synthase family. In terms of assembly, homotetramer. It depends on FMNH2 as a cofactor.

It carries out the reaction 5-O-(1-carboxyvinyl)-3-phosphoshikimate = chorismate + phosphate. The protein operates within metabolic intermediate biosynthesis; chorismate biosynthesis; chorismate from D-erythrose 4-phosphate and phosphoenolpyruvate: step 7/7. Its function is as follows. Catalyzes the anti-1,4-elimination of the C-3 phosphate and the C-6 proR hydrogen from 5-enolpyruvylshikimate-3-phosphate (EPSP) to yield chorismate, which is the branch point compound that serves as the starting substrate for the three terminal pathways of aromatic amino acid biosynthesis. This reaction introduces a second double bond into the aromatic ring system. The sequence is that of Chorismate synthase from Rhodococcus opacus (strain B4).